A 150-amino-acid chain; its full sequence is Large ribosomal subunit protein eL19 (150 aa).

The disordered stretch occupies residues 56-89 (KGQSRARARAFQEARKKGRHRGPGSKKGKKTARM). A compositionally biased stretch (basic residues) spans 71 to 89 (KKGRHRGPGSKKGKKTARM).

The protein belongs to the eukaryotic ribosomal protein eL19 family. In terms of assembly, part of the 50S ribosomal subunit.

Its function is as follows. Binds to the 23S rRNA. The chain is Large ribosomal subunit protein eL19 from Thermococcus kodakarensis (strain ATCC BAA-918 / JCM 12380 / KOD1) (Pyrococcus kodakaraensis (strain KOD1)).